The sequence spans 136 residues: Histone H3, embryonic (136 aa).

A disordered region spans residues 1–43; it reads MARTKQTARKSTGGKAPRKQLATKAARKSAPATGGVKKPHRYR. The residue at position 5 (Lys-5) is an N6-methylated lysine. Position 10 is an N6-acetyllysine; alternate (Lys-10). Lys-10 is modified (N6-methylated lysine; alternate). A Phosphoserine modification is found at Ser-11. Residues Lys-15 and Lys-24 each carry the N6-acetyllysine modification. N6-methylated lysine occurs at positions 28, 37, and 80.

It belongs to the histone H3 family. As to quaternary structure, the nucleosome is a histone octamer containing two molecules each of H2A, H2B, H3 and H4 assembled in one H3-H4 heterotetramer and two H2A-H2B heterodimers. The octamer wraps approximately 147 bp of DNA. In terms of processing, acetylation is generally linked to gene activation. Post-translationally, methylation at Lys-5 is linked to gene activation. Methylation at Lys-10 is linked to gene repression.

It is found in the nucleus. The protein localises to the chromosome. In terms of biological role, core component of nucleosome. Nucleosomes wrap and compact DNA into chromatin, limiting DNA accessibility to the cellular machineries which require DNA as a template. Histones thereby play a central role in transcription regulation, DNA repair, DNA replication and chromosomal stability. DNA accessibility is regulated via a complex set of post-translational modifications of histones, also called histone code, and nucleosome remodeling. The chain is Histone H3, embryonic from Strongylocentrotus purpuratus (Purple sea urchin).